Reading from the N-terminus, the 776-residue chain is Systemic RNA interference defective protein 1 (776 aa).

The signal sequence occupies residues 1 to 17 (MIRVYLIILMHLVIGLT). Topologically, residues 18 to 319 (QNNSTTPSPI…ENQSYAVPTA (302 aa)) are extracellular. Residues asparagine 19, asparagine 20, asparagine 32, asparagine 205, asparagine 210, asparagine 234, asparagine 290, and asparagine 311 are each glycosylated (N-linked (GlcNAc...) asparagine). An involved in dsRNA-binding region spans residues 22–312 (TTPSPIITSS…SFEFKKLENQ (291 aa)). Residues 320-340 (LMMIFLTTPCLLFLPIVINII) form a helical membrane-spanning segment. Residues 341–429 (KNSRKLAPSQ…KQDSLSLHGQ (89 aa)) are Cytoplasmic-facing. Positions 360–390 (PSEQRDMDLSHDEQQNTSSELENNGEIPAAE) are disordered. The segment covering 362-373 (EQRDMDLSHDEQ) has biased composition (basic and acidic residues). Residues 430 to 450 (MLQYPVAIILPVLMHTAIEFH) form a helical membrane-spanning segment. Over 451–481 (KWTTSTMANRDEMCFHNHACARPLGELRAWN) the chain is Extracellular. Residues 482-502 (NIITNIGYTLYGAIFIVLSIC) form a helical membrane-spanning segment. Residues 503 to 510 (RRGRHEYS) are Cytoplasmic-facing. A helical membrane pass occupies residues 511 to 531 (HVFGTYECTLLDVTIGVFMVL). The Extracellular segment spans residues 532-543 (QSIASATYHICP). Residues 544-564 (SDVAFQFDTPCIQVICGLLMV) form a helical membrane-spanning segment. Topologically, residues 565 to 575 (RQWFVRHESPS) are cytoplasmic. The helical transmembrane segment at 576-596 (PAYTNILLVGVVSLNFLISAF) threads the bilayer. Over 597 to 599 (SKT) the chain is Extracellular. A helical transmembrane segment spans residues 600–620 (SYVRFIIAVIHVIVVGSICLA). At 621 to 633 (KERSLGSEKLKTR) the chain is on the cytoplasmic side. Residues 634–654 (FFIMAFSMGNFAAIVMYLTLS) form a helical membrane-spanning segment. Topologically, residues 655 to 659 (AFHLN) are extracellular. Residues 660–680 (QIATYCFIINCIMYLMYYGCM) traverse the membrane as a helical segment. Residues 681–691 (KVLHSERITSK) lie on the Cytoplasmic side of the membrane. The helical transmembrane segment at 692-712 (AKLCGALSLLAWAVAGFFFFQ) threads the bilayer. The Extracellular segment spans residues 713–741 (DDTDWTRSAAASRALNKPCLLLGFFGSHD). Residues 742-762 (LWHIFGALAGLFTFIFVSFVD) form a helical membrane-spanning segment. Topologically, residues 763–776 (DDLINTRKTSINIF) are cytoplasmic.

The protein belongs to the SID1 family. In terms of assembly, may self-associate to form multimers. As to expression, expressed in most non-neuronal cells, including body wall muscle cells.

Its subcellular location is the cell membrane. In terms of biological role, plays a role in RNA-mediated gene silencing by acting cell-autonomously as a channel for the transport of double-stranded RNA (dsRNA) between cells. Mediates the spread of dsRNA and subsequent silencing of genes in cells distant from the site of dsRNA introduction. Selective for dsRNA. Preferentially binds long dsRNA, from 50 base pairs up to 700. Short 20 base-pair long molecules are not bound. May also bind dsDNA, but with lower affinity. Binding may be sequence-independent. Required for avoidance behavior induced by small RNAs derived from pathogenic bacteria such as P.aeruginosa. The chain is Systemic RNA interference defective protein 1 from Caenorhabditis elegans.